A 361-amino-acid polypeptide reads, in one-letter code: MSFNTFGHMFRVTTFGESHGVAIGCVVDGCPPLIPLTEADIQGDLDRRRPGQSRFTTQRQEADQVKILSGVMAHPVSGEQVTTGTPIALQIENTDQRSKDYSEIKDKYRPGHADFTYEAKYGIRDYRGGGRSSARETASRVAAGAVARKVVPGMTIRAALVQMGPHAIDRAKWDWAEISNNPFFCPDKDKAAFFEEYLDGIRKTGSSIGAVIEVIAEGVPAGLGAPIYGKLDSDLAAALMSINAVKGVEIGDGFATAALSGEENADEIRSSNHGPVFLSNHAGGILGGISTGQPVVARFAVKPTSSILSPRKTIDREGHDTDILTKGRHDPCVGIRAVPVAEAMVACVLADHLIRHRGQVG.

NADP(+) is bound by residues Arg-48 and Arg-54. FMN contacts are provided by residues 131–133, 243–244, Gly-287, 302–306, and Arg-328; these read RSS, NA, and KPTSS.

It belongs to the chorismate synthase family. In terms of assembly, homotetramer. The cofactor is FMNH2.

It catalyses the reaction 5-O-(1-carboxyvinyl)-3-phosphoshikimate = chorismate + phosphate. It functions in the pathway metabolic intermediate biosynthesis; chorismate biosynthesis; chorismate from D-erythrose 4-phosphate and phosphoenolpyruvate: step 7/7. In terms of biological role, catalyzes the anti-1,4-elimination of the C-3 phosphate and the C-6 proR hydrogen from 5-enolpyruvylshikimate-3-phosphate (EPSP) to yield chorismate, which is the branch point compound that serves as the starting substrate for the three terminal pathways of aromatic amino acid biosynthesis. This reaction introduces a second double bond into the aromatic ring system. The chain is Chorismate synthase from Rhodopseudomonas palustris (strain BisA53).